We begin with the raw amino-acid sequence, 571 residues long: Dual specificity testis-specific protein kinase 2 (571 aa).

The Protein kinase domain occupies 58–313 (DFTCEKIGSG…EIGKTLEEIL (256 aa)). Residues 64–72 (IGSGFFSEV) and Lys87 each bind ATP. Catalysis depends on Asp176, which acts as the Proton acceptor. Ser219 carries the phosphoserine; by autocatalysis modification. Ser369, Ser456, and Ser460 each carry phosphoserine. The disordered stretch occupies residues 521–571 (ENGFGSRPQGTSPCPAGASEEMEVEERPAGSTPATFSTSGIGLQTQGKQDG). Residues 552–571 (TPATFSTSGIGLQTQGKQDG) show a composition bias toward polar residues.

This sequence belongs to the protein kinase superfamily. TKL Ser/Thr protein kinase family. Mg(2+) is required as a cofactor. Requires Mn(2+) as cofactor. As to expression, predominantly expressed in testis and prostate. Found predominantly in non-germinal Sertoli cells.

The protein localises to the nucleus. It carries out the reaction L-seryl-[protein] + ATP = O-phospho-L-seryl-[protein] + ADP + H(+). The catalysed reaction is L-threonyl-[protein] + ATP = O-phospho-L-threonyl-[protein] + ADP + H(+). The enzyme catalyses L-tyrosyl-[protein] + ATP = O-phospho-L-tyrosyl-[protein] + ADP + H(+). Activated by autophosphorylation on Ser-219. Functionally, dual specificity protein kinase activity catalyzing autophosphorylation and phosphorylation of exogenous substrates on both serine/threonine and tyrosine residues. Phosphorylates cofilin at 'Ser-3'. May play an important role in spermatogenesis. This Homo sapiens (Human) protein is Dual specificity testis-specific protein kinase 2 (TESK2).